Consider the following 208-residue polypeptide: Ribosomal RNA large subunit methyltransferase E (208 aa).

S-adenosyl-L-methionine is bound by residues G63, W65, D83, D99, and D124. Catalysis depends on K164, which acts as the Proton acceptor.

Belongs to the class I-like SAM-binding methyltransferase superfamily. RNA methyltransferase RlmE family.

The protein resides in the cytoplasm. The enzyme catalyses uridine(2552) in 23S rRNA + S-adenosyl-L-methionine = 2'-O-methyluridine(2552) in 23S rRNA + S-adenosyl-L-homocysteine + H(+). Specifically methylates the uridine in position 2552 of 23S rRNA at the 2'-O position of the ribose in the fully assembled 50S ribosomal subunit. This is Ribosomal RNA large subunit methyltransferase E from Salmonella arizonae (strain ATCC BAA-731 / CDC346-86 / RSK2980).